Reading from the N-terminus, the 24-residue chain is Brevinin-1Bb (24 aa).

A disulfide bridge connects residues Cys-18 and Cys-24.

Expressed by the skin glands.

The protein resides in the secreted. Its function is as follows. Antibacterial activity against Gram-positive bacterium S.aureus and Gram-negative bacterium E.coli. Has activity against C.albicans. The protein is Brevinin-1Bb of Lithobates berlandieri (Rio Grande leopard frog).